Here is a 380-residue protein sequence, read N- to C-terminus: MKNQKIFHLVTVSKSIPLMRGQIEFLRKKNMDVHIVSSDGKELKQYDNEIAHVIPMKRDIALFSDLKSLLKMILLFHKEKPFIVNSGTPKAGLIGTIAAFITQRPIRIYTVRGLRLETVKGFKYFVLYLMEKIAMFCATDIIAISESLKHKIITSNLAKENKITVLGFGSSNGIQFEKFQLDNNKLEEKYHKLLNDNFVIGYVGRIVKDKGIHELIQSFKIIVSKGYNVKLLVIGSLETENSIDESDYLFLTQNPNVVLIKHVSDPISFYNNMNVFVFPTHREGFGNVSIEAQALEVPVITTNVTGAIDTVVNGETGFIVEKGDFKAIAEKIEKLINDESLRETIGHNGRKRVENKFSSQIIWEELESMYNTFLKESEGK.

This sequence belongs to the glycosyltransferase group 1 family. Glycosyltransferase 4 subfamily.

It participates in capsule biogenesis; capsule polysaccharide biosynthesis. Functionally, required for the biosynthesis of type 1 capsular polysaccharide. The polypeptide is Capsular polysaccharide biosynthesis glycosyltransferase CapM (capM) (Staphylococcus aureus).